The following is a 173-amino-acid chain: Shikimate kinase (173 aa).

14-19 provides a ligand contact to ATP; it reads GAGKST. Ser-18 contributes to the Mg(2+) binding site. Substrate-binding residues include Asp-36, Arg-60, and Gly-82. ATP is bound at residue Arg-120. Residue Arg-140 participates in substrate binding. Gln-157 provides a ligand contact to ATP.

Belongs to the shikimate kinase family. In terms of assembly, monomer. It depends on Mg(2+) as a cofactor.

It localises to the cytoplasm. The catalysed reaction is shikimate + ATP = 3-phosphoshikimate + ADP + H(+). It participates in metabolic intermediate biosynthesis; chorismate biosynthesis; chorismate from D-erythrose 4-phosphate and phosphoenolpyruvate: step 5/7. In terms of biological role, catalyzes the specific phosphorylation of the 3-hydroxyl group of shikimic acid using ATP as a cosubstrate. This is Shikimate kinase from Baumannia cicadellinicola subsp. Homalodisca coagulata.